The primary structure comprises 267 residues: Tryptophan synthase alpha chain (267 aa).

Catalysis depends on proton acceptor residues glutamate 47 and aspartate 58.

The protein belongs to the TrpA family. Tetramer of two alpha and two beta chains.

The catalysed reaction is (1S,2R)-1-C-(indol-3-yl)glycerol 3-phosphate + L-serine = D-glyceraldehyde 3-phosphate + L-tryptophan + H2O. It functions in the pathway amino-acid biosynthesis; L-tryptophan biosynthesis; L-tryptophan from chorismate: step 5/5. The alpha subunit is responsible for the aldol cleavage of indoleglycerol phosphate to indole and glyceraldehyde 3-phosphate. The polypeptide is Tryptophan synthase alpha chain (Chlorobium limicola (strain DSM 245 / NBRC 103803 / 6330)).